Reading from the N-terminus, the 228-residue chain is Cytochrome c oxidase subunit 2 (228 aa).

Residues 1-26 (MATWANLGLQDSSSPLMEQLNFFHDH) are Mitochondrial intermembrane-facing. The chain crosses the membrane as a helical span at residues 27–48 (TLLILTMITILVGYIMGMLSFN). Residues 49 to 62 (KFTNRFLLHGQTIE) lie on the Mitochondrial matrix side of the membrane. Residues 63-82 (IIWTVLPAIILMFIAFPSLR) traverse the membrane as a helical segment. At 83–228 (LLYLMDEINT…FIKWITSMTN (146 aa)) the chain is on the mitochondrial intermembrane side. Positions 161, 196, 198, 200, 204, and 207 each coordinate Cu cation. E198 contributes to the Mg(2+) binding site.

This sequence belongs to the cytochrome c oxidase subunit 2 family. Component of the cytochrome c oxidase (complex IV, CIV), a multisubunit enzyme composed of a catalytic core of 3 subunits and several supernumerary subunits. The complex exists as a monomer or a dimer and forms supercomplexes (SCs) in the inner mitochondrial membrane with ubiquinol-cytochrome c oxidoreductase (cytochrome b-c1 complex, complex III, CIII). Cu cation serves as cofactor.

It localises to the mitochondrion inner membrane. It catalyses the reaction 4 Fe(II)-[cytochrome c] + O2 + 8 H(+)(in) = 4 Fe(III)-[cytochrome c] + 2 H2O + 4 H(+)(out). Functionally, component of the cytochrome c oxidase, the last enzyme in the mitochondrial electron transport chain which drives oxidative phosphorylation. The respiratory chain contains 3 multisubunit complexes succinate dehydrogenase (complex II, CII), ubiquinol-cytochrome c oxidoreductase (cytochrome b-c1 complex, complex III, CIII) and cytochrome c oxidase (complex IV, CIV), that cooperate to transfer electrons derived from NADH and succinate to molecular oxygen, creating an electrochemical gradient over the inner membrane that drives transmembrane transport and the ATP synthase. Cytochrome c oxidase is the component of the respiratory chain that catalyzes the reduction of oxygen to water. Electrons originating from reduced cytochrome c in the intermembrane space (IMS) are transferred via the dinuclear copper A center (CU(A)) of subunit 2 and heme A of subunit 1 to the active site in subunit 1, a binuclear center (BNC) formed by heme A3 and copper B (CU(B)). The BNC reduces molecular oxygen to 2 water molecules using 4 electrons from cytochrome c in the IMS and 4 protons from the mitochondrial matrix. This Anopheles gambiae (African malaria mosquito) protein is Cytochrome c oxidase subunit 2 (COII).